The sequence spans 198 residues: Recombination protein RecR (198 aa).

The segment at 57–72 (CSICGNLTESDPCAIC) adopts a C4-type zinc-finger fold. In terms of domain architecture, Toprim spans 80 to 175 (TTILVVEESK…KVTRLARGLA (96 aa)).

Belongs to the RecR family.

May play a role in DNA repair. It seems to be involved in an RecBC-independent recombinational process of DNA repair. It may act with RecF and RecO. The polypeptide is Recombination protein RecR (Lactococcus lactis subsp. lactis (strain IL1403) (Streptococcus lactis)).